The chain runs to 209 residues: Phosphopantothenoylcysteine decarboxylase (209 aa).

FMN contacts are provided by residues 28-30 (GSV) and 53-55 (TKS). The active-site Proton donor is the His90. Residues 106 to 109 (SANT) and Ala140 contribute to the FMN site. 3 residues coordinate N-[(R)-4-phosphopantothenoyl]-L-cysteine: Asn142, Arg172, and Ala174. Cys175 functions as the Proton donor in the catalytic mechanism. Residue Met183 coordinates N-[(R)-4-phosphopantothenoyl]-L-cysteine.

It belongs to the HFCD (homooligomeric flavin containing Cys decarboxylase) superfamily. Homotrimer. FMN serves as cofactor. Expressed in roots, shoots, leaves, flowers, developing siliques and seeds with highest expression in seed embryos and phloem.

It catalyses the reaction N-[(R)-4-phosphopantothenoyl]-L-cysteine + H(+) = (R)-4'-phosphopantetheine + CO2. Its pathway is cofactor biosynthesis; coenzyme A biosynthesis; CoA from (R)-pantothenate: step 3/5. Its function is as follows. Involved in plant growth, and salt and osmotic tolerance. Catalyzes the decarboxylation of 4'-phosphopantothenoylcysteine to 4'-phosphopantetheine, a key step in coenzyme A biosynthesis. The enzyme is also able to decarboxylate pantothenoylcysteine to pantothenoylcysteamine. This chain is Phosphopantothenoylcysteine decarboxylase, found in Arabidopsis thaliana (Mouse-ear cress).